We begin with the raw amino-acid sequence, 190 residues long: Imidazoleglycerol-phosphate dehydratase (190 aa).

It belongs to the imidazoleglycerol-phosphate dehydratase family.

Its subcellular location is the cytoplasm. The catalysed reaction is D-erythro-1-(imidazol-4-yl)glycerol 3-phosphate = 3-(imidazol-4-yl)-2-oxopropyl phosphate + H2O. It functions in the pathway amino-acid biosynthesis; L-histidine biosynthesis; L-histidine from 5-phospho-alpha-D-ribose 1-diphosphate: step 6/9. This Aliarcobacter butzleri (strain RM4018) (Arcobacter butzleri) protein is Imidazoleglycerol-phosphate dehydratase.